A 977-amino-acid polypeptide reads, in one-letter code: uncharacterized protein (977 aa).

Residues 100-152 form a disordered region; sequence ATSPLQQNGKSRDTEKPPSMKEKDLSSNSSSQHDKAFHERVDQGKNKSSTTKY. Composition is skewed to basic and acidic residues over residues 109-124 and 131-144; these read KSRD…EKDL and QHDK…DQGK. Ser-165 carries the phosphoserine modification. Composition is skewed to polar residues over residues 166–175 and 183–193; these read PGQSVNSLKP and STKSSTSSEMH. The disordered stretch occupies residues 166–194; that stretch reads PGQSVNSLKPNSGDEVPSTKSSTSSEMHT.

This is an uncharacterized protein from Schizosaccharomyces pombe (strain 972 / ATCC 24843) (Fission yeast).